The primary structure comprises 316 residues: Protoheme IX farnesyltransferase (316 aa).

9 helical membrane passes run 32–52 (VMSL…GHIH), 53–73 (PVLG…SGAL), 93–113 (IPAG…LSGF), 116–136 (VILG…TIFF), 152–172 (NIVI…ACVT), 180–200 (TVLF…LALF), 221–241 (VTKH…VLPS), 252–271 (LVAA…VWRM), and 289–309 (IFYL…PVLV).

Belongs to the UbiA prenyltransferase family. Protoheme IX farnesyltransferase subfamily.

It localises to the cell inner membrane. It carries out the reaction heme b + (2E,6E)-farnesyl diphosphate + H2O = Fe(II)-heme o + diphosphate. It functions in the pathway porphyrin-containing compound metabolism; heme O biosynthesis; heme O from protoheme: step 1/1. Its function is as follows. Converts heme B (protoheme IX) to heme O by substitution of the vinyl group on carbon 2 of heme B porphyrin ring with a hydroxyethyl farnesyl side group. The polypeptide is Protoheme IX farnesyltransferase (Rhizobium johnstonii (strain DSM 114642 / LMG 32736 / 3841) (Rhizobium leguminosarum bv. viciae)).